The sequence spans 230 residues: Large ribosomal subunit protein uL1 (230 aa).

Belongs to the universal ribosomal protein uL1 family. As to quaternary structure, part of the 50S ribosomal subunit.

Functionally, binds directly to 23S rRNA. The L1 stalk is quite mobile in the ribosome, and is involved in E site tRNA release. In terms of biological role, protein L1 is also a translational repressor protein, it controls the translation of the L11 operon by binding to its mRNA. The chain is Large ribosomal subunit protein uL1 from Bacillus cereus (strain B4264).